The primary structure comprises 72 residues: Translation initiation factor IF-1 (72 aa).

The region spanning 1–72 (MSKQDVIEVE…TRGRIVYRYK (72 aa)) is the S1-like domain.

Belongs to the IF-1 family. Component of the 30S ribosomal translation pre-initiation complex which assembles on the 30S ribosome in the order IF-2 and IF-3, IF-1 and N-formylmethionyl-tRNA(fMet); mRNA recruitment can occur at any time during PIC assembly.

Its subcellular location is the cytoplasm. One of the essential components for the initiation of protein synthesis. Stabilizes the binding of IF-2 and IF-3 on the 30S subunit to which N-formylmethionyl-tRNA(fMet) subsequently binds. Helps modulate mRNA selection, yielding the 30S pre-initiation complex (PIC). Upon addition of the 50S ribosomal subunit IF-1, IF-2 and IF-3 are released leaving the mature 70S translation initiation complex. This chain is Translation initiation factor IF-1, found in Pelotomaculum thermopropionicum (strain DSM 13744 / JCM 10971 / SI).